Reading from the N-terminus, the 400-residue chain is Queuine tRNA-ribosyltransferase catalytic subunit 1 (400 aa).

The active-site Proton acceptor is the Asp103. Residues 103–107, Asp157, Gln200, and Gly227 each bind queuine; that span reads DSGGF. Positions 258–264 are RNA binding; that stretch reads GVGYAVD. Residue Asp277 is the Nucleophile of the active site. Residues 282-286 are RNA binding; important for wobble base 34 recognition; the sequence is TRTAR. Cys315, Cys317, Cys320, and His345 together coordinate Zn(2+).

The protein belongs to the queuine tRNA-ribosyltransferase family. In terms of assembly, heterodimer of a catalytic subunit qtrt1 and an accessory subunit qtrt2. Zn(2+) is required as a cofactor.

It localises to the cytoplasm. Its subcellular location is the mitochondrion outer membrane. It carries out the reaction guanosine(34) in tRNA + queuine = queuosine(34) in tRNA + guanine. In terms of biological role, catalytic subunit of the queuine tRNA-ribosyltransferase (TGT) that catalyzes the base-exchange of a guanine (G) residue with queuine (Q) at position 34 (anticodon wobble position) in tRNAs with GU(N) anticodons (tRNA-Asp, -Asn, -His and -Tyr), resulting in the hypermodified nucleoside queuosine (7-(((4,5-cis-dihydroxy-2-cyclopenten-1-yl)amino)methyl)-7-deazaguanosine). Catalysis occurs through a double-displacement mechanism. The nucleophile active site attacks the C1' of nucleotide 34 to detach the guanine base from the RNA, forming a covalent enzyme-RNA intermediate. The proton acceptor active site deprotonates the incoming queuine, allowing a nucleophilic attack on the C1' of the ribose to form the product. The chain is Queuine tRNA-ribosyltransferase catalytic subunit 1 from Danio rerio (Zebrafish).